A 70-amino-acid polypeptide reads, in one-letter code: Large ribosomal subunit protein bL31 (70 aa).

The Zn(2+) site is built by cysteine 16, cysteine 18, cysteine 36, and cysteine 39.

It belongs to the bacterial ribosomal protein bL31 family. Type A subfamily. Part of the 50S ribosomal subunit. Zn(2+) is required as a cofactor.

In terms of biological role, binds the 23S rRNA. The chain is Large ribosomal subunit protein bL31 from Fervidobacterium nodosum (strain ATCC 35602 / DSM 5306 / Rt17-B1).